Here is a 148-residue protein sequence, read N- to C-terminus: Putative transmembrane protein ORF23 (148 aa).

The first 18 residues, 1–18 (MVIILLGVSIVVPGLFLA), serve as a signal peptide directing secretion. The Extracellular portion of the chain corresponds to 19-118 (TETPQTNTFE…YVGWPSGAET (100 aa)). The helical transmembrane segment at 119–139 (IITNIADIIIMATAVMIIGAI) threads the bilayer. Over 140–148 (YTGYKVSIK) the chain is Cytoplasmic.

It is found in the host membrane. The polypeptide is Putative transmembrane protein ORF23 (His1 virus (isolate Australia/Victoria) (His1V)).